A 295-amino-acid polypeptide reads, in one-letter code: Ethanolamine ammonia-lyase small subunit (295 aa).

Residues Val207, Glu228, and Cys258 each coordinate adenosylcob(III)alamin.

It belongs to the EutC family. As to quaternary structure, the basic unit is a heterodimer which dimerizes to form tetramers. The heterotetramers trimerize; 6 large subunits form a core ring with 6 small subunits projecting outwards. Requires adenosylcob(III)alamin as cofactor.

It localises to the bacterial microcompartment. It carries out the reaction ethanolamine = acetaldehyde + NH4(+). It functions in the pathway amine and polyamine degradation; ethanolamine degradation. Catalyzes the deamination of various vicinal amino-alcohols to oxo compounds. Allows this organism to utilize ethanolamine as the sole source of nitrogen and carbon in the presence of external vitamin B12. The polypeptide is Ethanolamine ammonia-lyase small subunit (Escherichia fergusonii (strain ATCC 35469 / DSM 13698 / CCUG 18766 / IAM 14443 / JCM 21226 / LMG 7866 / NBRC 102419 / NCTC 12128 / CDC 0568-73)).